Reading from the N-terminus, the 1343-residue chain is DNA-directed RNA polymerase subunit beta (1343 aa).

It belongs to the RNA polymerase beta chain family. The RNAP catalytic core consists of 2 alpha, 1 beta, 1 beta' and 1 omega subunit. When a sigma factor is associated with the core the holoenzyme is formed, which can initiate transcription.

The catalysed reaction is RNA(n) + a ribonucleoside 5'-triphosphate = RNA(n+1) + diphosphate. Its function is as follows. DNA-dependent RNA polymerase catalyzes the transcription of DNA into RNA using the four ribonucleoside triphosphates as substrates. The chain is DNA-directed RNA polymerase subunit beta from Haemophilus influenzae (strain PittEE).